The following is a 380-amino-acid chain: GTP-binding protein 10 (380 aa).

The region spanning 13–148 is the Obg domain; sequence GNFVDNVRLY…RNIRLDLKLI (136 aa). The region spanning 149-344 is the OBG-type G domain; the sequence is ADFGLVGFPN…LKSLIRQSLE (196 aa). GTP contacts are provided by residues 155–162, 202–206, and 278–281; these read GFPNAGKS, DLPGL, and NKMD.

The protein belongs to the TRAFAC class OBG-HflX-like GTPase superfamily. OBG GTPase family.

Its subcellular location is the nucleus. The protein localises to the nucleolus. In terms of biological role, may be involved in the ribosome maturation process. The protein is GTP-binding protein 10 (gtpbp10) of Danio rerio (Zebrafish).